A 248-amino-acid polypeptide reads, in one-letter code: Cytochrome c oxidase subunit 2 (248 aa).

Residues 1-12 (MLLMNLFTIINN) form the signal peptide. Topologically, residues 13–39 (DVPTPYNMYFQDSTTPHQEGILELHDN) are mitochondrial intermembrane. Residues 40–61 (IMFYMLTVLGLVSWMMIIIIKD) traverse the membrane as a helical segment. Over 62 to 79 (YKNNPITYKYIKHGQMIE) the chain is Mitochondrial matrix. Residues 80–104 (IIWTILPAIILLMIAFPSFILLYLC) traverse the membrane as a helical segment. At 105-248 (DEVISPAMTI…PTFLTWLNEQ (144 aa)) the chain is on the mitochondrial intermembrane side. H183, C218, E220, C222, H226, and M229 together coordinate Cu cation. E220 contacts Mg(2+).

The protein belongs to the cytochrome c oxidase subunit 2 family. Component of the cytochrome c oxidase (complex IV, CIV), a multisubunit enzyme composed of a catalytic core of 3 subunits and several supernumerary subunits. The complex exists as a monomer or a dimer and forms supercomplexes (SCs) in the inner mitochondrial membrane with ubiquinol-cytochrome c oxidoreductase (cytochrome b-c1 complex, complex III, CIII). It depends on Cu cation as a cofactor. The signal sequence of COX2 is processed by IMP1.

It is found in the mitochondrion inner membrane. It catalyses the reaction 4 Fe(II)-[cytochrome c] + O2 + 8 H(+)(in) = 4 Fe(III)-[cytochrome c] + 2 H2O + 4 H(+)(out). In terms of biological role, component of the cytochrome c oxidase, the last enzyme in the mitochondrial electron transport chain which drives oxidative phosphorylation. The respiratory chain contains 3 multisubunit complexes succinate dehydrogenase (complex II, CII), ubiquinol-cytochrome c oxidoreductase (cytochrome b-c1 complex, complex III, CIII) and cytochrome c oxidase (complex IV, CIV), that cooperate to transfer electrons derived from NADH and succinate to molecular oxygen, creating an electrochemical gradient over the inner membrane that drives transmembrane transport and the ATP synthase. Cytochrome c oxidase is the component of the respiratory chain that catalyzes the reduction of oxygen to water. Electrons originating from reduced cytochrome c in the intermembrane space (IMS) are transferred via the dinuclear copper A center (CU(A)) of subunit 2 and heme A of subunit 1 to the active site in subunit 1, a binuclear center (BNC) formed by heme A3 and copper B (CU(B)). The BNC reduces molecular oxygen to 2 water molecules using 4 electrons from cytochrome c in the IMS and 4 protons from the mitochondrial matrix. In Eremothecium gossypii (strain ATCC 10895 / CBS 109.51 / FGSC 9923 / NRRL Y-1056) (Yeast), this protein is Cytochrome c oxidase subunit 2 (COX2).